The primary structure comprises 193 residues: Interferon epsilon (193 aa).

An N-terminal signal peptide occupies residues M1 to S21. C53 and C163 are disulfide-bonded. N-linked (GlcNAc...) asparagine glycosylation occurs at N139.

It belongs to the alpha/beta interferon family.

The protein resides in the secreted. Type I interferon required for maintaining basal levels of IFN-regulated genes, including 2'-5'-oligoadenylate synthetase, IRF7 and ISG15, in the female reproductive tract. Directly mediates protection against viral and bacterial genital infections. The protein is Interferon epsilon (IFNE) of Sus scrofa (Pig).